The following is a 288-amino-acid chain: Bifunctional protein FolD (288 aa).

Residues 166-168 (GAS) and Ile232 each bind NADP(+).

It belongs to the tetrahydrofolate dehydrogenase/cyclohydrolase family. Homodimer.

It catalyses the reaction (6R)-5,10-methylene-5,6,7,8-tetrahydrofolate + NADP(+) = (6R)-5,10-methenyltetrahydrofolate + NADPH. The catalysed reaction is (6R)-5,10-methenyltetrahydrofolate + H2O = (6R)-10-formyltetrahydrofolate + H(+). It functions in the pathway one-carbon metabolism; tetrahydrofolate interconversion. In terms of biological role, catalyzes the oxidation of 5,10-methylenetetrahydrofolate to 5,10-methenyltetrahydrofolate and then the hydrolysis of 5,10-methenyltetrahydrofolate to 10-formyltetrahydrofolate. The chain is Bifunctional protein FolD from Escherichia coli O139:H28 (strain E24377A / ETEC).